Here is a 135-residue protein sequence, read N- to C-terminus: Galectin-1 (135 aa).

The residue at position 2 (Ala-2) is an N-acetylalanine. In terms of domain architecture, Galectin spans 4 to 135; that stretch reads GLVASNLNLK…DFKIKCVAFE (132 aa). N6-acetyllysine occurs at positions 13, 19, and 29. At Ser-30 the chain carries Phosphoserine. A beta-D-galactoside is bound by residues 45-49, His-53, Asn-62, and 69-72; these read HFNPR and WGTE. The residue at position 108 (Lys-108) is an N6-acetyllysine; alternate. Lys-108 bears the N6-succinyllysine; alternate mark. N6-acetyllysine is present on Lys-128.

In terms of assembly, binds LGALS3BP. Interacts with CD2, CD3, CD4, CD6, CD7, CD43, ALCAM and CD45. Interacts with laminin. Interacts with SUSD2. Exists in a reversible and active monomer-homodimer equilibrium, the mononomer/dimer state is regulated by lectin concentration. Interacts with cargo receptor TMED10; the interaction mediates the translocation from the cytoplasm into the ERGIC (endoplasmic reticulum-Golgi intermediate compartment) and thereby secretion.

It localises to the cytoplasm. The protein localises to the secreted. The protein resides in the extracellular space. Its subcellular location is the extracellular matrix. In terms of biological role, lectin that binds beta-galactoside and a wide array of complex carbohydrates. Plays a role in regulating apoptosis, cell proliferation and cell differentiation. Inhibits CD45 protein phosphatase activity and therefore the dephosphorylation of Lyn kinase. Strong inducer of T-cell apoptosis. This is Galectin-1 (LGALS1) from Cricetulus griseus (Chinese hamster).